A 380-amino-acid polypeptide reads, in one-letter code: Lipid-A-disaccharide synthase (380 aa).

This sequence belongs to the LpxB family.

The enzyme catalyses a lipid X + a UDP-2-N,3-O-bis[(3R)-3-hydroxyacyl]-alpha-D-glucosamine = a lipid A disaccharide + UDP + H(+). It participates in bacterial outer membrane biogenesis; LPS lipid A biosynthesis. Its function is as follows. Condensation of UDP-2,3-diacylglucosamine and 2,3-diacylglucosamine-1-phosphate to form lipid A disaccharide, a precursor of lipid A, a phosphorylated glycolipid that anchors the lipopolysaccharide to the outer membrane of the cell. The protein is Lipid-A-disaccharide synthase of Vibrio vulnificus (strain CMCP6).